A 301-amino-acid polypeptide reads, in one-letter code: 4-hydroxy-tetrahydrodipicolinate synthase (301 aa).

Residue T57 participates in pyruvate binding. Y143 serves as the catalytic Proton donor/acceptor. The active-site Schiff-base intermediate with substrate is the K171. I211 provides a ligand contact to pyruvate.

This sequence belongs to the DapA family. In terms of assembly, homotetramer; dimer of dimers.

Its subcellular location is the cytoplasm. The enzyme catalyses L-aspartate 4-semialdehyde + pyruvate = (2S,4S)-4-hydroxy-2,3,4,5-tetrahydrodipicolinate + H2O + H(+). It functions in the pathway amino-acid biosynthesis; L-lysine biosynthesis via DAP pathway; (S)-tetrahydrodipicolinate from L-aspartate: step 3/4. Its function is as follows. Catalyzes the condensation of (S)-aspartate-beta-semialdehyde [(S)-ASA] and pyruvate to 4-hydroxy-tetrahydrodipicolinate (HTPA). This Bifidobacterium longum (strain DJO10A) protein is 4-hydroxy-tetrahydrodipicolinate synthase.